We begin with the raw amino-acid sequence, 730 residues long: ATP-dependent DNA helicase Hel308 (730 aa).

Residues Q28 and I46 to T53 each bind ATP. The region spanning E33–E199 is the Helicase ATP-binding domain. The short motif at D144–H147 is the DEAH box element. The 202-residue stretch at A232–I433 folds into the Helicase C-terminal domain.

This sequence belongs to the helicase family. Hel308 subfamily. As to quaternary structure, monomer.

The catalysed reaction is Couples ATP hydrolysis with the unwinding of duplex DNA by translocating in the 3'-5' direction.. The enzyme catalyses ATP + H2O = ADP + phosphate + H(+). Functionally, DNA-dependent ATPase and 3'-5' DNA helicase that may be involved in repair of stalled replication forks. This chain is ATP-dependent DNA helicase Hel308, found in Methanosarcina mazei (strain ATCC BAA-159 / DSM 3647 / Goe1 / Go1 / JCM 11833 / OCM 88) (Methanosarcina frisia).